Consider the following 60-residue polypeptide: Large ribosomal subunit protein bL32 (60 aa).

Over residues 1 to 16 (MAVPKRKTSPSKRGMR) the composition is skewed to basic residues. A disordered region spans residues 1 to 60 (MAVPKRKTSPSKRGMRRSADALKAPTYVEDKNSGEMRRPHHIDLKTGMYRGRQVLTPKES). Over residues 28–44 (VEDKNSGEMRRPHHIDL) the composition is skewed to basic and acidic residues.

Belongs to the bacterial ribosomal protein bL32 family.

This is Large ribosomal subunit protein bL32 from Mesorhizobium japonicum (strain LMG 29417 / CECT 9101 / MAFF 303099) (Mesorhizobium loti (strain MAFF 303099)).